Consider the following 187-residue polypeptide: Large ribosomal subunit protein uL10 (187 aa).

The protein belongs to the universal ribosomal protein uL10 family. As to quaternary structure, part of the ribosomal stalk of the 50S ribosomal subunit. The N-terminus interacts with L11 and the large rRNA to form the base of the stalk. The C-terminus forms an elongated spine to which L12 dimers bind in a sequential fashion forming a multimeric L10(L12)X complex.

Functionally, forms part of the ribosomal stalk, playing a central role in the interaction of the ribosome with GTP-bound translation factors. In Roseiflexus castenholzii (strain DSM 13941 / HLO8), this protein is Large ribosomal subunit protein uL10.